Here is a 947-residue protein sequence, read N- to C-terminus: Mitogen-activated protein kinase kinase kinase 14 (947 aa).

Disordered regions lie at residues 1–37 and 135–171; these read MAVM…KKQS and KGKR…TPEQ. Residues 135-151 are compositionally biased toward basic residues; that stretch reads KGKRRSKARKKRKKKSS. Positions 400–655 constitute a Protein kinase domain; the sequence is ATHQLRLGRG…ELGGKVNRAL (256 aa). The tract at residues 401–653 is interaction with ZFP91; the sequence is THQLRLGRGS…AAELGGKVNR (253 aa). ATP-binding positions include 406-414 and lysine 429; that span reads LGRGSFGEV. The active-site Proton acceptor is the aspartate 515. At threonine 559 the chain carries Phosphothreonine. Disordered stretches follow at residues 662–766 and 805–830; these read KSPW…ATVP and LSDD…GVHS. Basic and acidic residues predominate over residues 665–674; sequence WRGEYKEPRH. The span at 713–727 shows a compositional bias: pro residues; that stretch reads LQPPLPPEPPEPNKS. A compositionally biased stretch (low complexity) spans 741 to 752; that stretch reads EPLPLSSLEPAP. The span at 814–829 shows a compositional bias: polar residues; the sequence is SKASQSSRDTLSSGVH.

Belongs to the protein kinase superfamily. STE Ser/Thr protein kinase family. MAP kinase kinase kinase subfamily. Interacts with TRAF2, TRAF5, TRAF6, IKKA and NFKB2/P100. Interacts with TRAF3 and PELI3. Interacts with NIBP; the interaction is direct. Interacts with ARRB1 and ARRB2. Interacts with GRB10. Interacts with ZFP91. Interacts with NLRP12; this interaction promotes proteasomal degradation of MAP3K14. Directly interacts with DDX3X. Interacts (via C-terminus and kinase domain) with PPPC3A (via N-terminus) and PPP3CB. Autophosphorylated. Phosphorylation at Thr-559 is required to activate its kinase activity and 'Lys-63'-linked polyubiquitination. Phosphorylated by CHUK/IKKA leading to MAP3K14 destabilization. Post-translationally, ubiquitinated. Undergoes both 'Lys-48'- and 'Lys-63'-linked polyubiquitination. 'Lys-48'-linked polyubiquitination leads to its degradation by the proteasome, while 'Lys-63'-linked polyubiquitination stabilizes and activates it. In terms of tissue distribution, weakly expressed in testis, small intestine, spleen, thymus, peripheral blood leukocytes, prostate, ovary and colon.

Its subcellular location is the cytoplasm. It carries out the reaction L-seryl-[protein] + ATP = O-phospho-L-seryl-[protein] + ADP + H(+). The enzyme catalyses L-threonyl-[protein] + ATP = O-phospho-L-threonyl-[protein] + ADP + H(+). Functionally, lymphotoxin beta-activated kinase which seems to be exclusively involved in the activation of NF-kappa-B and its transcriptional activity. Phosphorylates CHUK/IKKA, thereby promoting proteolytic processing of NFKB2/P100, which leads to NF-kappa-B activation via the non-canonical pathway. Has an essential role in the non-canonical NF-kappa-B signaling that regulates genes encoding molecules involved in B-cell survival, lymphoid organogenesis, and immune response. Could act in a receptor-selective manner. The chain is Mitogen-activated protein kinase kinase kinase 14 from Homo sapiens (Human).